We begin with the raw amino-acid sequence, 281 residues long: 3'-5' exonuclease Snipper (281 aa).

Residues 19 to 52 (DGARPDPNNDPEESFNEDEVTEANSVPAKSKKSR) form a disordered region. Residues 27 to 39 (NDPEESFNEDEVT) are compositionally biased toward acidic residues. In terms of domain architecture, Exonuclease spans 64–262 (YVIAVDFEAT…MCKMVRDGAL (199 aa)). The Mg(2+) site is built by Asp69 and Glu71. Glu71 functions as the Proton acceptor in the catalytic mechanism. The AMP site is built by Glu71 and Ala72. Residue Asp183 coordinates Mg(2+). Catalysis depends on His240, which acts as the Proton acceptor. AMP is bound at residue His240. A Mg(2+)-binding site is contributed by Asp245.

Belongs to the ERI2 family. It depends on Mg(2+) as a cofactor.

The protein localises to the cytoplasm. It is found in the nucleus. It localises to the nucleolus. Its function is as follows. A broad-specificity exonuclease, capable of degrading both structure-specific DNA and RNA targets without sequence specificity in vitro. Requires two to five unpaired nucleotides in the 3' region for efficient binding and nuclease activity. Binds with higher affinity to RNA and DNA stem-loop substrates compared to single-stranded substrate. Binds to the 3'-end of histone mRNAs and degrades them, suggesting that it might play a role in histone mRNA decay after replication. Can readily cleave the histone stem-loop RNA beyond the -12 (UUU) position in the loop to produce -14 and then -16 oligonucleotide fragments for both the stem-loop and the reverse stem-loop. Cleaves both the single-stranded 3' flank as well as the double-stranded stem portion of histone stem-loop RNA. Might affect histone mRNA 3' processing thereby regulating histone protein expression. Has an important role in development and tissue formation. Might have a role in 5.8S rRNA precursor processing. The chain is 3'-5' exonuclease Snipper from Drosophila melanogaster (Fruit fly).